We begin with the raw amino-acid sequence, 204 residues long: Inactive ribonuclease-like protein 9 (204 aa).

Positions 1–26 (MMRTLITTHPLLLLLLLQQLLQPVQF) are cleaved as a signal peptide. 3 disulfide bridges follow: Cys-97–Cys-152, Cys-115–Cys-167, and Cys-122–Cys-129. 2 N-linked (GlcNAc...) asparagine glycosylation sites follow: Asn-130 and Asn-142.

It belongs to the pancreatic ribonuclease family.

The protein resides in the secreted. Functionally, does not exhibit any ribonuclease activity. This is Inactive ribonuclease-like protein 9 (RNASE9) from Papio anubis (Olive baboon).